A 506-amino-acid chain; its full sequence is MKEYRVYLERARSRQQDFLYPLIFREYIYGLAYSHNFNRSIFVENGGYDNKYSLLNVKRLITRMYQQNHLIISANDSNKNPFWGYNKNFYSQIISEGFAIVVEIPFFLQLSSSLEEAEIIKSYKNVRSIHSIFPFLEDKFTYLNYVSDIRIPYPIHLEILVQILRYWVKDVPFFHLLRLFLYDFCNWNCFIPSKKSISTFSKSNPRLFLFLYNFYVCEYESIFLFLRNKSSHLRLKSFSVFFERIFFYAKREHLVEVFSKDFSYTLPFFKDPNIHYVRYQGKCILASKNVPFLMNKWKHYFIYLWQCFFDVWSQPRTININQLSEHSFQLLGYFSNVRLNRSVVRSQMLQNTFLIEIVSKKLDIIVPIIPLIRSLAKAKFCNVLGHPISKPVWADSSDFDIIERFLRICRNLSHYYNGSSKKKSLYRIKYILRLSCIKTLACKHKSTVRAFLKRSGSEELLEEFFTEEEEILSLIFPRDSFTLHRFHRNRIWYLDIIFSNDLVNDE.

It belongs to the intron maturase 2 family. MatK subfamily.

The protein resides in the plastid. It localises to the chloroplast. Its function is as follows. Usually encoded in the trnK tRNA gene intron. Probably assists in splicing its own and other chloroplast group II introns. The chain is Maturase K from Trifolium spumosum (Mediterranean clover).